The sequence spans 170 residues: Adenine phosphoribosyltransferase (170 aa).

It belongs to the purine/pyrimidine phosphoribosyltransferase family. In terms of assembly, homodimer.

It localises to the cytoplasm. The enzyme catalyses AMP + diphosphate = 5-phospho-alpha-D-ribose 1-diphosphate + adenine. Its pathway is purine metabolism; AMP biosynthesis via salvage pathway; AMP from adenine: step 1/1. Functionally, catalyzes a salvage reaction resulting in the formation of AMP, that is energically less costly than de novo synthesis. This is Adenine phosphoribosyltransferase from Symbiobacterium thermophilum (strain DSM 24528 / JCM 14929 / IAM 14863 / T).